A 724-amino-acid chain; its full sequence is NAD(+) hydrolase SARM1 (724 aa).

The transit peptide at 1–27 directs the protein to the mitochondrion; the sequence is MVLTLLLSAYKLCRFFAMSGPRPGAER. The stretch at 60-100 is one ARM 1 repeat; the sequence is EVQDALERALPELQQALSALKQAGGARAVGAGLAEVFQLVE. Residues Trp103, Arg110, 149–157, and 190–193 contribute to the NAD(+) site; these read EQILVAENR and HMFK. 7 ARM repeats span residues 114–153, 155–193, 196–235, 237–280, 281–314, 315–354, and 359–402; these read QGLC…QILV, ENRD…HMFK, EETC…NCAL, GGQA…LATN, KEVE…CLVD, ASDT…AEAA, and QGKT…EEVP. 2 SAM domains span residues 412–476 and 486–548; these read WKEA…LKTF and NLAD…MLHS. Ser548 and Ser558 each carry phosphoserine. The region spanning 560 to 703 is the TIR domain; that stretch reads DTPDVFISYR…KIIRFLQGRS (144 aa). NAD(+) contacts are provided by residues 569–570 and Glu599; that span reads RR. The active site involves Glu642. The tract at residues 704–724 is disordered; the sequence is SRDSSAGSDTSLEGAAPMGPT.

The protein belongs to the SARM1 family. Homooctamer; forms an octameric ring via SAM domains. Interacts with TICAM1/TRIF and thereby interferes with TICAM1/TRIF function. Interacts with MAPK10/JNK3 and SDC2 (via cytoplasmic domain). Post-translationally, phosphorylation at Ser-548 by JNK kinases (MAPK8, MAPK9 and /or MAPK10) enhance the NAD(+) hydrolase (NADase) activity. Phosphorylation at Ser-548 and subsequent activation takes place in response to oxidative stress conditions and inhibits mitochondrial respiration. Predominantly expressed in brain, kidney and liver. Expressed at lower level in placenta.

The protein resides in the cytoplasm. It localises to the cell projection. The protein localises to the axon. It is found in the dendrite. Its subcellular location is the synapse. The protein resides in the mitochondrion. The catalysed reaction is NAD(+) + H2O = ADP-D-ribose + nicotinamide + H(+). The enzyme catalyses NAD(+) = cyclic ADP-beta-D-ribose + nicotinamide + H(+). It carries out the reaction NADP(+) + H2O = ADP-D-ribose 2'-phosphate + nicotinamide + H(+). Autoinhibited: in the inactive state, the enzymatic TIR domain is held apart by the autoinhibiting ARM repeats. NAD(+)-binding to ARM repeats maintains an inactive state by promoting interaction between ARM repeats and the TIR domain, thereby facilitating inhibition of the enzymatic TIR domain. Following activation, possibly by nicotinamide mononucleotide (NMN), auto-inhibitory interactions are released, allowing self-association of the TIR domains and subsequent activation of the NAD(+) hydrolase (NADase) activity. Self-association of TIR domains is facilitated by the octamer of SAM domains. NAD(+) hydrolase activity is inhibited by nicotinamide. Specifically inhibited by berberine chloride and zinc chloride. Its function is as follows. NAD(+) hydrolase, which plays a key role in axonal degeneration following injury by regulating NAD(+) metabolism. Acts as a negative regulator of MYD88- and TRIF-dependent toll-like receptor signaling pathway by promoting Wallerian degeneration, an injury-induced form of programmed subcellular death which involves degeneration of an axon distal to the injury site. Wallerian degeneration is triggered by NAD(+) depletion: in response to injury, SARM1 is activated and catalyzes cleavage of NAD(+) into ADP-D-ribose (ADPR), cyclic ADPR (cADPR) and nicotinamide; NAD(+) cleavage promoting cytoskeletal degradation and axon destruction. Also able to hydrolyze NADP(+), but not other NAD(+)-related molecules. Can activate neuronal cell death in response to stress. Regulates dendritic arborization through the MAPK4-JNK pathway. Involved in innate immune response: inhibits both TICAM1/TRIF- and MYD88-dependent activation of JUN/AP-1, TRIF-dependent activation of NF-kappa-B and IRF3, and the phosphorylation of MAPK14/p38. The polypeptide is NAD(+) hydrolase SARM1 (Homo sapiens (Human)).